The chain runs to 113 residues: Iron-sulfur cluster insertion protein ErpA (113 aa).

3 residues coordinate iron-sulfur cluster: Cys-41, Cys-105, and Cys-107.

The protein belongs to the HesB/IscA family. Homodimer. It depends on iron-sulfur cluster as a cofactor.

In terms of biological role, required for insertion of 4Fe-4S clusters for at least IspG. The chain is Iron-sulfur cluster insertion protein ErpA from Actinobacillus pleuropneumoniae serotype 5b (strain L20).